A 532-amino-acid polypeptide reads, in one-letter code: Cytochrome P450 714B2 (532 aa).

Topologically, residues 1–2 are lumenal; sequence ME. A helical; Signal-anchor for type III membrane protein transmembrane segment spans residues 3 to 23; sequence VGMVVVVAAKVLVSLWCVGAC. Over 24–532 the chain is Cytoplasmic; it reads CLAAYLYRVV…LTRVQGAYRH (509 aa). A heme-binding site is contributed by Cys-474.

This sequence belongs to the cytochrome P450 family. Heme serves as cofactor. As to expression, highly expressed in shoot, spikelet and uppermost internode. Detected in roots, leaves and anthers.

Its subcellular location is the membrane. In terms of biological role, catalyzes the 13-hydroxylation of gibberellins (GAs). Determines the ratio of GA4 and GA1. Converts GA12 into GA53. The protein is Cytochrome P450 714B2 (CYP714B2) of Oryza sativa subsp. japonica (Rice).